The chain runs to 215 residues: Redox-sensing transcriptional repressor Rex (215 aa).

The H-T-H motif DNA-binding region spans 18 to 57 (LYYRFLKNLHASGKQRVSSAELSDAVKVDSATIRRDFSYF). NAD(+) is bound at residue 92-97 (GVGNLG).

Belongs to the transcriptional regulatory Rex family. Homodimer.

Its subcellular location is the cytoplasm. In terms of biological role, modulates transcription in response to changes in cellular NADH/NAD(+) redox state. This Bacillus subtilis (strain 168) protein is Redox-sensing transcriptional repressor Rex.